The primary structure comprises 863 residues: DNA mismatch repair protein MutS (863 aa).

An ATP-binding site is contributed by 617–624 (GPNMGGKS).

It belongs to the DNA mismatch repair MutS family.

This protein is involved in the repair of mismatches in DNA. It is possible that it carries out the mismatch recognition step. This protein has a weak ATPase activity. This chain is DNA mismatch repair protein MutS, found in Pseudomonas fluorescens (strain SBW25).